Consider the following 420-residue polypeptide: UDP-N-acetylglucosamine 1-carboxyvinyltransferase (420 aa).

22–23 (KN) is a phosphoenolpyruvate binding site. Arg93 serves as a coordination point for UDP-N-acetyl-alpha-D-glucosamine. Cys117 acts as the Proton donor in catalysis. Cys117 carries the post-translational modification 2-(S-cysteinyl)pyruvic acid O-phosphothioketal. Positions 307 and 329 each coordinate UDP-N-acetyl-alpha-D-glucosamine.

The protein belongs to the EPSP synthase family. MurA subfamily.

It is found in the cytoplasm. The enzyme catalyses phosphoenolpyruvate + UDP-N-acetyl-alpha-D-glucosamine = UDP-N-acetyl-3-O-(1-carboxyvinyl)-alpha-D-glucosamine + phosphate. It participates in cell wall biogenesis; peptidoglycan biosynthesis. Functionally, cell wall formation. Adds enolpyruvyl to UDP-N-acetylglucosamine. In Cellvibrio japonicus (strain Ueda107) (Pseudomonas fluorescens subsp. cellulosa), this protein is UDP-N-acetylglucosamine 1-carboxyvinyltransferase.